We begin with the raw amino-acid sequence, 402 residues long: Plasminogen activator inhibitor 1 (402 aa).

The signal sequence occupies residues 1-23 (MRMSLVFACLAMGLALTFAEGSA). N-linked (GlcNAc...) asparagine glycans are attached at residues asparagine 232, asparagine 288, and asparagine 352.

This sequence belongs to the serpin family. Forms a heterodimer with TMPRSS7. Interacts with VTN. Binds LRP1B; binding is followed by internalization and degradation. Interacts with PPP1CB. In complex with PLAU/uPA, interacts with PLAUR/uPAR. Interacts with SORL1 and LRP1, either alone or in complex with PLAU; these interactions are abolished in the presence of LRPAP1/RAP. The ternary complex composed of PLAUR-PLAU-PAI1 also interacts with SORL1. Interacts with PLAT/tPA. Also interacts with SORL1, when complexed to PLAT/tPA.

It localises to the secreted. Its function is as follows. Serine protease inhibitor. Inhibits TMPRSS7. Is a primary inhibitor of tissue-type plasminogen activator (PLAT) and urokinase-type plasminogen activator (PLAU). As PLAT inhibitor, it is required for fibrinolysis down-regulation and is responsible for the controlled degradation of blood clots. As PLAU inhibitor, it is involved in the regulation of cell adhesion and spreading. Acts as a regulator of cell migration, independently of its role as protease inhibitor. It is required for stimulation of keratinocyte migration during cutaneous injury repair. It is involved in cellular and replicative senescence. Plays a role in alveolar type 2 cells senescence in the lung. Is involved in the regulation of cementogenic differentiation of periodontal ligament stem cells, and regulates odontoblast differentiation and dentin formation during odontogenesis. This is Plasminogen activator inhibitor 1 (SERPINE1) from Sus scrofa (Pig).